The chain runs to 531 residues: Peptide chain release factor 3 (531 aa).

The region spanning 10 to 278 is the tr-type G domain; it reads RRRRTFAIIS…SLIDWAPAPK (269 aa). GTP-binding positions include 19–26, 87–91, and 141–144; these read SHPDAGKT, DTPGH, and NKYD.

It belongs to the TRAFAC class translation factor GTPase superfamily. Classic translation factor GTPase family. PrfC subfamily.

It localises to the cytoplasm. In terms of biological role, increases the formation of ribosomal termination complexes and stimulates activities of RF-1 and RF-2. It binds guanine nucleotides and has strong preference for UGA stop codons. It may interact directly with the ribosome. The stimulation of RF-1 and RF-2 is significantly reduced by GTP and GDP, but not by GMP. This chain is Peptide chain release factor 3, found in Neisseria meningitidis serogroup B (strain ATCC BAA-335 / MC58).